Reading from the N-terminus, the 133-residue chain is Thioredoxin H2 (133 aa).

The interval Met-1 to Ser-22 is disordered. A Thioredoxin domain is found at Ser-6 to Ala-133. Catalysis depends on nucleophile residues Cys-59 and Cys-62. Cys-59 and Cys-62 are disulfide-bonded.

Belongs to the thioredoxin family. Plant H-type subfamily. As to quaternary structure, interacts with MDH1.

The protein localises to the cytoplasm. It is found in the mitochondrion. Functionally, thiol-disulfide oxidoreductase probably involved in the redox regulation of a number of cytosolic enzymes. Possesses insulin disulfide bonds reducing activity. In Arabidopsis thaliana (Mouse-ear cress), this protein is Thioredoxin H2 (TRX2).